The sequence spans 256 residues: Probable galactose dehydrogenase GalD (256 aa).

Residues glycine 20 to serine 23, aspartate 71 to leucine 72, and asparagine 98 each bind NAD(+). Residue serine 150 coordinates substrate. Catalysis depends on tyrosine 163, which acts as the Proton acceptor. Residues tyrosine 163 to lysine 167 and isoleucine 196 contribute to the NAD(+) site.

Belongs to the short-chain dehydrogenases/reductases (SDR) family.

In terms of biological role, involved in the degradation of galactose via the DeLey-Doudoroff pathway. Catalyzes the oxidation of galactose in the presence of NAD(+). Uses NAD(+) as a hydrogen acceptor more efficiently than NADP(+). The chain is Probable galactose dehydrogenase GalD (galD) from Rhizobium meliloti (strain 1021) (Ensifer meliloti).